The sequence spans 182 residues: uncharacterized protein (182 aa).

This is an uncharacterized protein from Mycobacterium tuberculosis (strain CDC 1551 / Oshkosh).